The primary structure comprises 414 residues: 2,3-diketo-5-methylthiopentyl-1-phosphate enolase (414 aa).

K99 (proton acceptor) is an active-site residue. Residues K148, 174 to 177 (KDDE), H265, G338, and 360 to 361 (GG) each bind substrate. 3 residues coordinate Mg(2+): K174, D176, and E177. The residue at position 174 (K174) is an N6-carboxylysine.

It belongs to the RuBisCO large chain family. Type IV subfamily. As to quaternary structure, homodimer. The cofactor is Mg(2+).

The catalysed reaction is 5-methylsulfanyl-2,3-dioxopentyl phosphate = 2-hydroxy-5-methylsulfanyl-3-oxopent-1-enyl phosphate. Its pathway is amino-acid biosynthesis; L-methionine biosynthesis via salvage pathway; L-methionine from S-methyl-5-thio-alpha-D-ribose 1-phosphate: step 3/6. Its function is as follows. Catalyzes the enolization of 2,3-diketo-5-methylthiopentyl-1-phosphate (DK-MTP-1-P) into 2-hydroxy-3-keto-5-methylthiopentenyl-1-phosphate (HK-MTPenyl-1-P). In Bacillus cereus (strain ATCC 10987 / NRS 248), this protein is 2,3-diketo-5-methylthiopentyl-1-phosphate enolase.